Consider the following 963-residue polypeptide: Iron-responsive element-binding protein 2 (963 aa).

Residues cysteine 512, cysteine 578, and cysteine 581 each coordinate [4Fe-4S] cluster.

The protein belongs to the aconitase/IPM isomerase family. As to quaternary structure, interacts with RBCK1 isoform 1 and isoform 2 only in iron-rich conditions. Interacts (when associated with the 4Fe-4S) with FBXL5. Interacts with CIAO1 and CIAO2A. [4Fe-4S] cluster is required as a cofactor. Ubiquitinated and degraded by the proteasome in presence of high level of iron and oxygen. Ubiquitinated by a SCF complex containing FBXL5. Upon iron and oxygen depletion FBXL5 is degraded, preventing ubiquitination and allowing its RNA-binding activity.

Its subcellular location is the cytoplasm. Functionally, RNA-binding protein that binds to iron-responsive elements (IRES), which are stem-loop structures found in the 5'-UTR of ferritin, and delta aminolevulinic acid synthase mRNAs, and in the 3'-UTR of transferrin receptor mRNA. Binding to the IRE element in ferritin results in the repression of its mRNA translation. Binding of the protein to the transferrin receptor mRNA inhibits the degradation of this otherwise rapidly degraded mRNA. This is Iron-responsive element-binding protein 2 (IREB2) from Homo sapiens (Human).